The following is a 261-amino-acid chain: Imidazole glycerol phosphate synthase subunit HisF (261 aa).

Active-site residues include Asp16 and Asp135.

The protein belongs to the HisA/HisF family. As to quaternary structure, heterodimer of HisH and HisF.

It localises to the cytoplasm. The enzyme catalyses 5-[(5-phospho-1-deoxy-D-ribulos-1-ylimino)methylamino]-1-(5-phospho-beta-D-ribosyl)imidazole-4-carboxamide + L-glutamine = D-erythro-1-(imidazol-4-yl)glycerol 3-phosphate + 5-amino-1-(5-phospho-beta-D-ribosyl)imidazole-4-carboxamide + L-glutamate + H(+). It participates in amino-acid biosynthesis; L-histidine biosynthesis; L-histidine from 5-phospho-alpha-D-ribose 1-diphosphate: step 5/9. In terms of biological role, IGPS catalyzes the conversion of PRFAR and glutamine to IGP, AICAR and glutamate. The HisF subunit catalyzes the cyclization activity that produces IGP and AICAR from PRFAR using the ammonia provided by the HisH subunit. The polypeptide is Imidazole glycerol phosphate synthase subunit HisF (Mycobacterium leprae (strain Br4923)).